Reading from the N-terminus, the 92-residue chain is MVRSVWKGPFVEGSLLKKADVARASGRHDVIKIWSRRSTILPQFVGLTFGVYNGQKHVPVAINEEMVGHKFGEFSPTRTFHGHSGDKKSKKG.

It belongs to the universal ribosomal protein uS19 family.

In terms of biological role, protein S19 forms a complex with S13 that binds strongly to the 16S ribosomal RNA. The sequence is that of Small ribosomal subunit protein uS19 from Rhodopseudomonas palustris (strain BisB5).